We begin with the raw amino-acid sequence, 100 residues long: UPF0213 protein YhbQ (100 aa).

The GIY-YIG domain maps to 2-77; it reads TPWFLYLIRT…KQLTKRQKER (76 aa).

Belongs to the UPF0213 family.

In Escherichia fergusonii (strain ATCC 35469 / DSM 13698 / CCUG 18766 / IAM 14443 / JCM 21226 / LMG 7866 / NBRC 102419 / NCTC 12128 / CDC 0568-73), this protein is UPF0213 protein YhbQ.